A 297-amino-acid chain; its full sequence is Trans-enoyl reductase TOXD (297 aa).

NADP(+)-binding positions include 162-165 (STAT) and Tyr203.

This sequence belongs to the zinc-containing alcohol dehydrogenase family. In terms of assembly, monomer.

Trans-enoyl reductase; part of the diffuse TOX2 gene cluster that mediates the biosynthesis of the HC-toxin, cyclic tetrapeptide of structure cyclo(D-Pro-L-Ala-D-Ala-L-Aeo), where Aeo stands for 2-amino-9,10-epoxi-8-oxodecanoic acid. HC-toxin is a determinant of specificity and virulence in the interaction between the producing fungus and its host, maize. TOXD does not seem to play a role in HC-toxin biosynthesis. This is Trans-enoyl reductase TOXD from Cochliobolus carbonum (Maize leaf spot fungus).